The chain runs to 463 residues: Chromosomal replication initiator protein DnaA (463 aa).

Positions 1–83 (MSLSLWQQCL…LRFEVGSKPI (83 aa)) are domain I, interacts with DnaA modulators. Residues 83-126 (IVPVAVSSAASSGASVPPAAVRASSLARPSWERVTAQPELSYRS) form a domain II region. The domain III, AAA+ region stretch occupies residues 127–343 (NVNPKHTFDN…GALNRVIANA (217 aa)). Residues Gly171, Gly173, Lys174, and Thr175 each contribute to the ATP site. The interval 344–463 (NFTGRAITID…FSNLIRTLSS (120 aa)) is domain IV, binds dsDNA.

It belongs to the DnaA family. Oligomerizes as a right-handed, spiral filament on DNA at oriC.

Its subcellular location is the cytoplasm. In terms of biological role, plays an essential role in the initiation and regulation of chromosomal replication. ATP-DnaA binds to the origin of replication (oriC) to initiate formation of the DNA replication initiation complex once per cell cycle. Binds the DnaA box (a 9 base pair repeat at the origin) and separates the double-stranded (ds)DNA. Forms a right-handed helical filament on oriC DNA; dsDNA binds to the exterior of the filament while single-stranded (ss)DNA is stabiized in the filament's interior. The ATP-DnaA-oriC complex binds and stabilizes one strand of the AT-rich DNA unwinding element (DUE), permitting loading of DNA polymerase. After initiation quickly degrades to an ADP-DnaA complex that is not apt for DNA replication. Binds acidic phospholipids. The sequence is that of Chromosomal replication initiator protein DnaA from Edwardsiella ictaluri (strain 93-146).